The following is a 185-amino-acid chain: Orotate phosphoribosyltransferase (185 aa).

Residues R102, K103, K106, H108, and 128–136 (DDVITTGGS) each bind 5-phospho-alpha-D-ribose 1-diphosphate. T132 and R160 together coordinate orotate.

It belongs to the purine/pyrimidine phosphoribosyltransferase family. PyrE subfamily. In terms of assembly, homodimer. Requires Mg(2+) as cofactor.

It carries out the reaction orotidine 5'-phosphate + diphosphate = orotate + 5-phospho-alpha-D-ribose 1-diphosphate. Its pathway is pyrimidine metabolism; UMP biosynthesis via de novo pathway; UMP from orotate: step 1/2. In terms of biological role, catalyzes the transfer of a ribosyl phosphate group from 5-phosphoribose 1-diphosphate to orotate, leading to the formation of orotidine monophosphate (OMP). In Leptospira biflexa serovar Patoc (strain Patoc 1 / Ames), this protein is Orotate phosphoribosyltransferase.